The primary structure comprises 111 residues: Universal stress protein B (111 aa).

Helical transmembrane passes span 1-21 and 90-110; these read MIST…NMAR and FILT…LLIW.

The protein belongs to the universal stress protein B family.

It localises to the cell inner membrane. The sequence is that of Universal stress protein B from Escherichia fergusonii (strain ATCC 35469 / DSM 13698 / CCUG 18766 / IAM 14443 / JCM 21226 / LMG 7866 / NBRC 102419 / NCTC 12128 / CDC 0568-73).